A 440-amino-acid chain; its full sequence is 3-phosphoshikimate 1-carboxyvinyltransferase (440 aa).

3-phosphoshikimate is bound by residues lysine 19, serine 20, and arginine 24. Lysine 19 contacts phosphoenolpyruvate. 2 residues coordinate phosphoenolpyruvate: glycine 92 and arginine 121. 3-phosphoshikimate contacts are provided by serine 166, glutamine 168, aspartate 315, and lysine 342. Glutamine 168 contacts phosphoenolpyruvate. The active-site Proton acceptor is the aspartate 315. Phosphoenolpyruvate is bound by residues arginine 346 and arginine 399.

This sequence belongs to the EPSP synthase family. As to quaternary structure, monomer.

It localises to the cytoplasm. It carries out the reaction 3-phosphoshikimate + phosphoenolpyruvate = 5-O-(1-carboxyvinyl)-3-phosphoshikimate + phosphate. It participates in metabolic intermediate biosynthesis; chorismate biosynthesis; chorismate from D-erythrose 4-phosphate and phosphoenolpyruvate: step 6/7. Catalyzes the transfer of the enolpyruvyl moiety of phosphoenolpyruvate (PEP) to the 5-hydroxyl of shikimate-3-phosphate (S3P) to produce enolpyruvyl shikimate-3-phosphate and inorganic phosphate. This Leptospira interrogans serogroup Icterohaemorrhagiae serovar copenhageni (strain Fiocruz L1-130) protein is 3-phosphoshikimate 1-carboxyvinyltransferase.